Consider the following 20-residue polypeptide: Conotoxin PnMLKM-D0211 (20 aa).

Positions 1-3 are excised as a propeptide; the sequence is VKR. Disulfide bonds link cysteine 4–cysteine 18, cysteine 5–cysteine 14, and cysteine 10–cysteine 17. Position 16 is a 4-hydroxyproline (proline 16). Position 19 is a tryptophan amide (tryptophan 19).

Belongs to the conotoxin M superfamily. As to expression, expressed by the venom duct.

The protein localises to the secreted. This is Conotoxin PnMLKM-D0211 from Conus pennaceus (Feathered cone).